We begin with the raw amino-acid sequence, 394 residues long: MPPKKQVEEKKVLLGRPGNNLKAGIVGLANVGKSTFFQAITRCPLGNPANYPFATIDPEEARVIVPSPRFDKLCEIYKKTASEVPAHLTVYDIAGLTKGASAGEGLGNAFLSHIRSVDSIYQVVRCFDDAEIIHVEGDVDPVRDLEIINQELRLKDIEFAQKALEGAEKIAKRGGQSLEVKQKKEEMDLITKIIKLLESGQRVANHSWTSKEVEIINSMFLLTAKPCIYLINLSERDYIRKKNKHLLRIKEWVDKYSPGDLIIPFSVSLEERLSHMSPEDAEEELKKLQTISALPKIITTMRQKLDLISFFTCGPDEVREWTIRRGTKAPQAAGVIHNDLMNTFILAQVMKCEDVFEYKDDSAIKAAGKLMQKGKDYVVEDGDIIYFRAGAGKN.

The 265-residue stretch at 21-285 folds into the OBG-type G domain; it reads LKAGIVGLAN…MSPEDAEEEL (265 aa). 30 to 35 is an ATP binding site; that stretch reads NVGKST. S34 and T55 together coordinate Mg(2+). T89 is subject to Phosphothreonine. K98 participates in a covalent cross-link: Glycyl lysine isopeptide (Lys-Gly) (interchain with G-Cter in ubiquitin). 2 positions are modified to phosphoserine: S116 and S119. Position 233 (L233) interacts with ATP. Positions 306–389 constitute a TGS domain; that stretch reads DLISFFTCGP…EDGDIIYFRA (84 aa).

The protein belongs to the TRAFAC class OBG-HflX-like GTPase superfamily. OBG GTPase family. YchF/OLA1 subfamily. In terms of assembly, monomer. Interacts with the 26S proteasome subunit RPT6. It depends on Mg(2+) as a cofactor.

Its subcellular location is the cytoplasm. In terms of biological role, hydrolyzes ATP, and can also hydrolyze GTP with lower efficiency. Has lower affinity for GTP. In Saccharomyces cerevisiae (strain ATCC 204508 / S288c) (Baker's yeast), this protein is Obg-like ATPase 1.